Consider the following 246-residue polypeptide: MKLFNRKVTLVSLILMAVFQFFMALIIKRIVISAGTDENFIGYLSYTPSLNILLQALTIVIAATIVSMEFDKKTIKFLLIRPVKRQKVFWSKLITVVMVSFYLYLAYYILALLFGLLFFGTSVTAESKTLLVNTLALIGSNWLEAVMMGLFGLLCSSLFRNSAVAVVVSFVVLYGASTLVQLMKLFENKWGSFLLFANTDFTQYRSGETALFSGMTPLFSIGILIIHAIFFIVVGWWCFCKRDVRV.

The next 6 membrane-spanning stretches (helical) occupy residues 7-27 (KVTL…ALII), 50-70 (LNIL…SMEF), 99-119 (VSFY…LLFF), 135-155 (LALI…GLLC), 163-183 (AVAV…VQLM), and 219-239 (FSIG…WWCF).

The protein resides in the cell membrane. This is an uncharacterized protein from Bacillus subtilis (strain 168).